Reading from the N-terminus, the 160-residue chain is Protein YpjC (160 aa).

The chain is Protein YpjC (ypjC) from Escherichia coli (strain K12).